We begin with the raw amino-acid sequence, 249 residues long: Orotidine 5'-phosphate decarboxylase (249 aa).

Substrate contacts are provided by residues D18, K40, 67 to 76 (DLKYHDIPNT), T127, R188, Q197, G217, and R218. K69 functions as the Proton donor in the catalytic mechanism.

Belongs to the OMP decarboxylase family. Type 1 subfamily. Homodimer.

The catalysed reaction is orotidine 5'-phosphate + H(+) = UMP + CO2. Its pathway is pyrimidine metabolism; UMP biosynthesis via de novo pathway; UMP from orotate: step 2/2. In terms of biological role, catalyzes the decarboxylation of orotidine 5'-monophosphate (OMP) to uridine 5'-monophosphate (UMP). This is Orotidine 5'-phosphate decarboxylase from Baumannia cicadellinicola subsp. Homalodisca coagulata.